Consider the following 200-residue polypeptide: Recombination protein RecR (200 aa).

The C4-type zinc finger occupies 57–72 (CQECRTFTEQDVCHIC). A Toprim domain is found at 81 to 176 (GQLCVVESPA…TASRIAHGVP (96 aa)).

The protein belongs to the RecR family.

Functionally, may play a role in DNA repair. It seems to be involved in an RecBC-independent recombinational process of DNA repair. It may act with RecF and RecO. This Vibrio cholerae serotype O1 (strain ATCC 39541 / Classical Ogawa 395 / O395) protein is Recombination protein RecR.